A 361-amino-acid chain; its full sequence is MKGLILVGGYGTRLRPLTLSVPKPLVEFCNRPMILHQIEALAEAGVTDIVLAVNYRPEVMVDTLKKYEKEYGVNITFSVETEPLGTAGPLKLAEKILKKDNSPFFVLNSDVICEYPFKELAEFHKSHGGKGTIVATKVDEPSKYGVIVHDLGTPNLIDRFVEKPKEFVGNRINAGLYILNPEVIDLIEMKPTSIETETFPKLVNEKSLYTFDLEGFWMDVGQPKDFLAGTGLYLQSLSRRHPEKLSTGSNIVSNAIIDPTAKISPDAKIGPDVVIGPNCVIGSGVRIVRSVLLKNCVVKENSLIKDTIVGWDSTIGRWCRLEGCAVLGHDVAVKDEVYVNGAKVLPHKSISANVPSEAIIM.

This sequence belongs to the transferase hexapeptide repeat family.

The protein resides in the cytoplasm. It carries out the reaction alpha-D-mannose 1-phosphate + GTP + H(+) = GDP-alpha-D-mannose + diphosphate. It participates in nucleotide-sugar biosynthesis; GDP-alpha-D-mannose biosynthesis; GDP-alpha-D-mannose from alpha-D-mannose 1-phosphate (GTP route): step 1/1. Functionally, involved in cell wall synthesis where it is required for glycosylation. Involved in cell cycle progression through cell-size checkpoint. In Candida glabrata (strain ATCC 2001 / BCRC 20586 / JCM 3761 / NBRC 0622 / NRRL Y-65 / CBS 138) (Yeast), this protein is Mannose-1-phosphate guanyltransferase 2 (MPG1).